We begin with the raw amino-acid sequence, 188 residues long: ATP synthase subunit delta (188 aa).

The protein belongs to the ATPase delta chain family. In terms of assembly, F-type ATPases have 2 components, F(1) - the catalytic core - and F(0) - the membrane proton channel. F(1) has five subunits: alpha(3), beta(3), gamma(1), delta(1), epsilon(1). F(0) has three main subunits: a(1), b(2) and c(10-14). The alpha and beta chains form an alternating ring which encloses part of the gamma chain. F(1) is attached to F(0) by a central stalk formed by the gamma and epsilon chains, while a peripheral stalk is formed by the delta and b chains.

It is found in the cell inner membrane. F(1)F(0) ATP synthase produces ATP from ADP in the presence of a proton or sodium gradient. F-type ATPases consist of two structural domains, F(1) containing the extramembraneous catalytic core and F(0) containing the membrane proton channel, linked together by a central stalk and a peripheral stalk. During catalysis, ATP synthesis in the catalytic domain of F(1) is coupled via a rotary mechanism of the central stalk subunits to proton translocation. In terms of biological role, this protein is part of the stalk that links CF(0) to CF(1). It either transmits conformational changes from CF(0) to CF(1) or is implicated in proton conduction. The protein is ATP synthase subunit delta of Rhizobium leguminosarum bv. trifolii (strain WSM2304).